A 42-amino-acid polypeptide reads, in one-letter code: Large ribosomal subunit protein P2 (42 aa).

This sequence belongs to the eukaryotic ribosomal protein P1/P2 family. In terms of assembly, P1 and P2 exist as dimers at the large ribosomal subunit. Phosphorylated.

In terms of biological role, plays an important role in the elongation step of protein synthesis. This chain is Large ribosomal subunit protein P2, found in Triticum aestivum (Wheat).